The following is a 102-amino-acid chain: Large ribosomal subunit protein bL21 (102 aa).

This sequence belongs to the bacterial ribosomal protein bL21 family. In terms of assembly, part of the 50S ribosomal subunit. Contacts protein L20.

Functionally, this protein binds to 23S rRNA in the presence of protein L20. This Syntrophotalea carbinolica (strain DSM 2380 / NBRC 103641 / GraBd1) (Pelobacter carbinolicus) protein is Large ribosomal subunit protein bL21.